A 666-amino-acid polypeptide reads, in one-letter code: Polyamine deacetylase HDAC10 (666 aa).

Residues 1 to 323 form a histone deacetylase region; it reads MGTALVYHED…VCMMVQTLLG (323 aa). Histidine 135 is an active-site residue.

This sequence belongs to the histone deacetylase family. HD type 2 subfamily. As to quaternary structure, interacts with HDAC3. Interacts with HDAC2 and NCOR2/SMRT. Interacts with HSPA8/HSC70. Interacts with MSH2. In terms of tissue distribution, widely expressed.

It localises to the cytoplasm. Its subcellular location is the nucleus. The catalysed reaction is N(8)-acetylspermidine + H2O = spermidine + acetate. The enzyme catalyses N-acetylputrescine + H2O = putrescine + acetate. It catalyses the reaction N-acetylcadaverine + H2O = cadaverine + acetate. It carries out the reaction N(6)-acetyl-L-lysyl-[protein] + H2O = L-lysyl-[protein] + acetate. Its function is as follows. Polyamine deacetylase (PDAC), which acts preferentially on N(8)-acetylspermidine, and also on acetylcadaverine and acetylputrescine. Exhibits attenuated catalytic activity toward N(1),N(8)-diacetylspermidine and very low activity, if any, toward N(1)-acetylspermidine. Histone deacetylase activity has been observed in vitro. Has also been shown to be involved in MSH2 deacetylation. The physiological relevance of protein/histone deacetylase activity is unclear and could be very weak. May play a role in the promotion of late stages of autophagy, possibly autophagosome-lysosome fusion and/or lysosomal exocytosis in neuroblastoma cells. May play a role in homologous recombination. May promote DNA mismatch repair. The protein is Polyamine deacetylase HDAC10 (Hdac10) of Mus musculus (Mouse).